Here is a 33-residue protein sequence, read N- to C-terminus: Photosystem II reaction center protein Psb30 (33 aa).

Residues 5 to 25 (LIVQLTSLALITLAGPLIVAL) form a helical membrane-spanning segment.

The protein belongs to the Psb30/Ycf12 family. In terms of assembly, PSII is composed of 1 copy each of membrane proteins PsbA, PsbB, PsbC, PsbD, PsbE, PsbF, PsbH, PsbI, PsbJ, PsbK, PsbL, PsbM, PsbT, PsbY, PsbZ, Psb30/Ycf12, peripheral proteins of the oxygen-evolving complex and a large number of cofactors. It forms dimeric complexes.

The protein resides in the plastid. It is found in the chloroplast thylakoid membrane. Its function is as follows. A core subunit of photosystem II (PSII), probably helps stabilize the reaction center. The sequence is that of Photosystem II reaction center protein Psb30 from Euglena sanguinea.